The following is a 204-amino-acid chain: Guanylate kinase (204 aa).

One can recognise a Guanylate kinase-like domain in the interval 1-182 (MLYIISAPSG…ALSDLNTIIC (182 aa)). 7–14 (APSGTGKS) serves as a coordination point for ATP.

It belongs to the guanylate kinase family.

It is found in the cytoplasm. The enzyme catalyses GMP + ATP = GDP + ADP. Essential for recycling GMP and indirectly, cGMP. The chain is Guanylate kinase from Baumannia cicadellinicola subsp. Homalodisca coagulata.